Here is an 862-residue protein sequence, read N- to C-terminus: Valine--tRNA ligase (862 aa).

A 'HIGH' region motif is present at residues 43-53 (PTVSGALHVGH). The segment at 459-494 (ERPILPDDAALPVDPSSDTPTGYHDSQRHQPGGFMA) is disordered. A 'KMSKS' region motif is present at residues 574–578 (KMSKS). Lys-577 is an ATP binding site.

Belongs to the class-I aminoacyl-tRNA synthetase family. ValS type 2 subfamily. As to quaternary structure, monomer.

The protein localises to the cytoplasm. It carries out the reaction tRNA(Val) + L-valine + ATP = L-valyl-tRNA(Val) + AMP + diphosphate. Catalyzes the attachment of valine to tRNA(Val). As ValRS can inadvertently accommodate and process structurally similar amino acids such as threonine, to avoid such errors, it has a 'posttransfer' editing activity that hydrolyzes mischarged Thr-tRNA(Val) in a tRNA-dependent manner. This chain is Valine--tRNA ligase, found in Salinispora arenicola (strain CNS-205).